Consider the following 450-residue polypeptide: L-galactonate dehydratase (450 aa).

The active site involves Lys221. Positions 251, 277, and 306 each coordinate Mg(2+). The active site involves His356.

This sequence belongs to the mandelate racemase/muconate lactonizing enzyme family. It depends on Mg(2+) as a cofactor.

It carries out the reaction L-galactonate = 2-dehydro-3-deoxy-L-galactonate + H2O. It participates in carbohydrate acid metabolism. Mediates the conversion of L-galactonate to 2-dehydro-3-deoxy-L-galactonate, the second step in D-galacturonate catabolic process. The sequence is that of L-galactonate dehydratase (lgd1) from Hypocrea jecorina (Trichoderma reesei).